The chain runs to 274 residues: Large ribosomal subunit protein uL2 (274 aa).

The disordered stretch occupies residues 200 to 274; the sequence is HALEKSGKAG…SKYIIERRKK (75 aa). 2 stretches are compositionally biased toward basic residues: residues 207–220 and 255–274; these read KAGRSRWLGRRPRN and LKTRAPKKHSSKYIIERRKK.

Belongs to the universal ribosomal protein uL2 family. Part of the 50S ribosomal subunit. Forms a bridge to the 30S subunit in the 70S ribosome.

In terms of biological role, one of the primary rRNA binding proteins. Required for association of the 30S and 50S subunits to form the 70S ribosome, for tRNA binding and peptide bond formation. It has been suggested to have peptidyltransferase activity; this is somewhat controversial. Makes several contacts with the 16S rRNA in the 70S ribosome. This Parabacteroides distasonis (strain ATCC 8503 / DSM 20701 / CIP 104284 / JCM 5825 / NCTC 11152) protein is Large ribosomal subunit protein uL2.